A 151-amino-acid chain; its full sequence is Cyanate hydratase (151 aa).

Active-site residues include Arg92, Glu95, and Ser118.

It belongs to the cyanase family.

The catalysed reaction is cyanate + hydrogencarbonate + 3 H(+) = NH4(+) + 2 CO2. In terms of biological role, catalyzes the reaction of cyanate with bicarbonate to produce ammonia and carbon dioxide. In Coprinopsis cinerea (strain Okayama-7 / 130 / ATCC MYA-4618 / FGSC 9003) (Inky cap fungus), this protein is Cyanate hydratase.